Here is a 287-residue protein sequence, read N- to C-terminus: Pyridoxal kinase PdxY (287 aa).

Substrate is bound by residues S10 and 45–46; that span reads TQ. ATP is bound by residues D112, A144, E149, K182, and 209–212; that span reads RPLV. A substrate-binding site is contributed by D224.

This sequence belongs to the pyridoxine kinase family. PdxY subfamily. In terms of assembly, homodimer. Mg(2+) serves as cofactor.

It carries out the reaction pyridoxal + ATP = pyridoxal 5'-phosphate + ADP + H(+). It functions in the pathway cofactor metabolism; pyridoxal 5'-phosphate salvage; pyridoxal 5'-phosphate from pyridoxal: step 1/1. In terms of biological role, pyridoxal kinase involved in the salvage pathway of pyridoxal 5'-phosphate (PLP). Catalyzes the phosphorylation of pyridoxal to PLP. The sequence is that of Pyridoxal kinase PdxY from Shigella dysenteriae serotype 1 (strain Sd197).